Consider the following 87-residue polypeptide: MKPNIHPEYRTVVFHDTSVDEYFKIGSTIKTDREIELDGVTYPYVTIDVSSKSHPFYTGKLRTVASEGNVARFTQRFGRFVSTKKGA.

It belongs to the bacterial ribosomal protein bL31 family. Type B subfamily. In terms of assembly, part of the 50S ribosomal subunit.

This chain is Large ribosomal subunit protein bL31B, found in Shigella boydii serotype 4 (strain Sb227).